Reading from the N-terminus, the 149-residue chain is Deoxyuridine 5'-triphosphate nucleotidohydrolase (149 aa).

Residues 68–70 (RSG), Asn-81, and 85–87 (LID) each bind substrate.

Belongs to the dUTPase family. Requires Mg(2+) as cofactor.

The catalysed reaction is dUTP + H2O = dUMP + diphosphate + H(+). It participates in pyrimidine metabolism; dUMP biosynthesis; dUMP from dCTP (dUTP route): step 2/2. Functionally, this enzyme is involved in nucleotide metabolism: it produces dUMP, the immediate precursor of thymidine nucleotides and it decreases the intracellular concentration of dUTP so that uracil cannot be incorporated into DNA. This is Deoxyuridine 5'-triphosphate nucleotidohydrolase from Nitrosospira multiformis (strain ATCC 25196 / NCIMB 11849 / C 71).